Here is a 114-residue protein sequence, read N- to C-terminus: Ribonuclease P protein component (114 aa).

This sequence belongs to the RnpA family. In terms of assembly, consists of a catalytic RNA component (M1 or rnpB) and a protein subunit.

The enzyme catalyses Endonucleolytic cleavage of RNA, removing 5'-extranucleotides from tRNA precursor.. Functionally, RNaseP catalyzes the removal of the 5'-leader sequence from pre-tRNA to produce the mature 5'-terminus. It can also cleave other RNA substrates such as 4.5S RNA. The protein component plays an auxiliary but essential role in vivo by binding to the 5'-leader sequence and broadening the substrate specificity of the ribozyme. The sequence is that of Ribonuclease P protein component from Borrelia hermsii (strain HS1 / DAH).